A 51-amino-acid polypeptide reads, in one-letter code: Cyclic phosphodiesterase (51 aa).

The Proton donor/acceptor role is filled by histidine 11. Position 13 (threonine 13) interacts with substrate. The active-site Proton donor/acceptor is histidine 38. 2 residues coordinate substrate: serine 40 and tyrosine 43.

This sequence belongs to the 2H phosphoesterase superfamily. CPD1 family.

Functionally, hydrolyzes ADP-ribose 1'',2''-cyclic phosphate (Appr&gt;1) that is produced during tRNA splicing into ADP-ribose 1''-phosphate (Appr-1''p). In Triticum aestivum (Wheat), this protein is Cyclic phosphodiesterase.